Consider the following 1014-residue polypeptide: Klotho (1014 aa).

Residues 1–34 form the signal peptide; sequence MLARAPPRRPPRLVLLRLLLLHLLLLALRARCLS. Residues 35 to 982 are Extracellular-facing; it reads AEPGQGAQTW…TECGFFQTRK (948 aa). 2 glycosyl hydrolase-1 regions span residues 59–508 and 517–955; these read LHDT…DNGF and LEGT…SNGF. Asn161, Asn285, Asn346, Asn609, Asn614, and Asn696 each carry an N-linked (GlcNAc...) asparagine glycan. A helical membrane pass occupies residues 983 to 1003; that stretch reads SLLVFISFLVFTFIISLALIF. Residues 1004–1014 lie on the Cytoplasmic side of the membrane; the sequence is HYSKKGQRSYK.

Belongs to the glycosyl hydrolase 1 family. Klotho subfamily. Homodimer. Interacts with FGF23 and FGFR1. Post-translationally, N-glycosylated. As to expression, membrane-bound protein is present in distal renal tubules, inner ear, ependymal cells of brain choroid plexus, elongating spermatids and mature oocytes (at protein level). Soluble peptide is present in serum (100 pM) and cerebrospinal fluid. Expressed strongly in kidney, moderately in brain choroid plexus, and at low levels in pituitary, placenta, skeletal muscle, urinary bladder, aorta, pancreas, testis, ovary, colon, thyroid gland and adipocytes.

Its subcellular location is the cell membrane. It is found in the apical cell membrane. The protein localises to the secreted. It catalyses the reaction a beta-D-glucuronoside + H2O = D-glucuronate + an alcohol. Its activity is regulated as follows. Inhibited by D-saccharic acid 1,4-lactone and taurocholic acid. Functionally, may have weak glycosidase activity towards glucuronylated steroids. However, it lacks essential active site Glu residues at positions 241 and 874, suggesting it may be inactive as a glycosidase in vivo. May be involved in the regulation of calcium and phosphorus homeostasis by inhibiting the synthesis of active vitamin D. Essential factor for the specific interaction between FGF23 and FGFR1. In terms of biological role, the Klotho peptide generated by cleavage of the membrane-bound isoform may be an anti-aging circulating hormone which would extend life span by inhibiting insulin/IGF1 signaling. This is Klotho (Kl) from Mus musculus (Mouse).